We begin with the raw amino-acid sequence, 420 residues long: UDP-N-acetyl-D-mannosamine dehydrogenase (420 aa).

5 residues coordinate NAD(+): Tyr-13, Ile-14, Asp-33, Thr-85, and Thr-126. 8 residues coordinate UDP-N-acetyl-alpha-D-mannosaminouronate: Arg-160, Val-161, Lys-212, Asn-216, Arg-219, His-250, Arg-252, and Gly-263. Lys-212 acts as the Proton donor/acceptor in catalysis. The active-site Nucleophile is Cys-266. The UDP-N-acetyl-alpha-D-mannosaminouronate site is built by Phe-330 and Lys-331. Arg-338 contacts NAD(+). UDP-N-acetyl-alpha-D-mannosaminouronate is bound at residue Lys-416.

Belongs to the UDP-glucose/GDP-mannose dehydrogenase family. WecC subfamily. In terms of assembly, homodimer.

It catalyses the reaction UDP-N-acetyl-alpha-D-mannosamine + 2 NAD(+) + H2O = UDP-N-acetyl-alpha-D-mannosaminouronate + 2 NADH + 3 H(+). Its pathway is bacterial outer membrane biogenesis; enterobacterial common antigen biosynthesis. Catalyzes the four-electron oxidation of UDP-N-acetyl-D-mannosamine (UDP-ManNAc), reducing NAD(+) and releasing UDP-N-acetylmannosaminuronic acid (UDP-ManNAcA). This Shigella flexneri protein is UDP-N-acetyl-D-mannosamine dehydrogenase.